A 631-amino-acid chain; its full sequence is Beta-galactosidase-1-like protein 3 (631 aa).

The Proton donor role is filled by glutamate 203. The Nucleophile role is filled by glutamate 277.

This sequence belongs to the glycosyl hydrolase 35 family.

In Rattus norvegicus (Rat), this protein is Beta-galactosidase-1-like protein 3 (Glb1l3).